The chain runs to 739 residues: Phosphoribosylformylglycinamidine synthase subunit PurL (739 aa).

The active site involves histidine 54. ATP-binding residues include tyrosine 57 and lysine 96. Residue glutamate 98 participates in Mg(2+) binding. Residues 99-102 and arginine 121 each bind substrate; that span reads SHNH. Residue histidine 100 is the Proton acceptor of the active site. Aspartate 122 provides a ligand contact to Mg(2+). Residue glutamine 245 participates in substrate binding. Aspartate 273 contacts Mg(2+). 317 to 319 contributes to the substrate binding site; it reads ESQ. Residues aspartate 500 and glycine 537 each coordinate ATP. Asparagine 538 lines the Mg(2+) pocket. Serine 540 serves as a coordination point for substrate.

This sequence belongs to the FGAMS family. In terms of assembly, monomer. Part of the FGAM synthase complex composed of 1 PurL, 1 PurQ and 2 PurS subunits.

The protein localises to the cytoplasm. The enzyme catalyses N(2)-formyl-N(1)-(5-phospho-beta-D-ribosyl)glycinamide + L-glutamine + ATP + H2O = 2-formamido-N(1)-(5-O-phospho-beta-D-ribosyl)acetamidine + L-glutamate + ADP + phosphate + H(+). It participates in purine metabolism; IMP biosynthesis via de novo pathway; 5-amino-1-(5-phospho-D-ribosyl)imidazole from N(2)-formyl-N(1)-(5-phospho-D-ribosyl)glycinamide: step 1/2. Its function is as follows. Part of the phosphoribosylformylglycinamidine synthase complex involved in the purines biosynthetic pathway. Catalyzes the ATP-dependent conversion of formylglycinamide ribonucleotide (FGAR) and glutamine to yield formylglycinamidine ribonucleotide (FGAM) and glutamate. The FGAM synthase complex is composed of three subunits. PurQ produces an ammonia molecule by converting glutamine to glutamate. PurL transfers the ammonia molecule to FGAR to form FGAM in an ATP-dependent manner. PurS interacts with PurQ and PurL and is thought to assist in the transfer of the ammonia molecule from PurQ to PurL. The sequence is that of Phosphoribosylformylglycinamidine synthase subunit PurL from Bacillus cytotoxicus (strain DSM 22905 / CIP 110041 / 391-98 / NVH 391-98).